The primary structure comprises 120 residues: Ribonuclease P protein component (120 aa).

This sequence belongs to the RnpA family. As to quaternary structure, consists of a catalytic RNA component (M1 or rnpB) and a protein subunit.

It carries out the reaction Endonucleolytic cleavage of RNA, removing 5'-extranucleotides from tRNA precursor.. Functionally, RNaseP catalyzes the removal of the 5'-leader sequence from pre-tRNA to produce the mature 5'-terminus. It can also cleave other RNA substrates such as 4.5S RNA. The protein component plays an auxiliary but essential role in vivo by binding to the 5'-leader sequence and broadening the substrate specificity of the ribozyme. The sequence is that of Ribonuclease P protein component from Dictyoglomus thermophilum (strain ATCC 35947 / DSM 3960 / H-6-12).